The chain runs to 434 residues: MTVYHFVGIKGTGMSALAQVLYDLGYTVQGSDVEKWFFTQKALEERGIPVLPFSKDNVHPGYTVIAGNAFPDTHEEIEAARQLSVPVIRYHRFLGELASKFTSIAVTGSHGKTTTTGLLAHVMQGAHPTSYLIGDGTGKGEPGSKYFVFEACEYRRHFLSYFPDYAIITNIDFDHPDYFANIDDVFSAFQQMAQQVKKGIVACGDDPYLQNIQAKVPILFYGLGEENDFQARNIVKTTEGTAFDVFVRNTFFASFTIPRFGTHNVLNALAVIALCHYEGIDAGTIAARLQTFQGVKRRFTEKTVGRQVLIDDYAHHPREIMATLEAARQKYPGREVVAIFQPHTYTRTQTFLSEFAESLQQADYVYLCDIFGSAREHHGKLSIRDLQEKIPRSQLLEEQNVSVLKQHRDAVLVFMGAGDIQKFQHAYEQAVLSA.

Position 108–114 (108–114 (GSHGKTT)) interacts with ATP.

It belongs to the MurCDEF family.

It is found in the cytoplasm. The catalysed reaction is UDP-N-acetyl-alpha-D-muramate + L-alanine + ATP = UDP-N-acetyl-alpha-D-muramoyl-L-alanine + ADP + phosphate + H(+). It functions in the pathway cell wall biogenesis; peptidoglycan biosynthesis. Cell wall formation. The sequence is that of UDP-N-acetylmuramate--L-alanine ligase from Geobacillus thermodenitrificans (strain NG80-2).